The chain runs to 1304 residues: Neuronal cell adhesion molecule (1304 aa).

The N-terminal stretch at 1–24 (MQLKIMPKKKRLSAGRVPLILFLC) is a signal peptide. The Extracellular portion of the chain corresponds to 25–1167 (QMISALEVPL…ASRQVDIATQ (1143 aa)). 2 Ig-like domains span residues 46 to 134 (PTIT…AAVS) and 141 to 235 (PSRS…QPIS). 2 cysteine pairs are disulfide-bonded: Cys-68/Cys-123 and Cys-167/Cys-218. Asn-83 carries an N-linked (GlcNAc...) asparagine glycan. 5 N-linked (GlcNAc...) asparagine glycosylation sites follow: Asn-223, Asn-245, Asn-251, Asn-276, and Asn-314. Ig-like domains follow at residues 267–356 (PPTF…ISVR), 361–448 (PYWI…AFVN), 454–541 (PRIL…VHLE), and 545–632 (PTWI…AVLS). Intrachain disulfides connect Cys-292-Cys-340 and Cys-382-Cys-432. Residues Asn-433 and Asn-507 are each glycosylated (N-linked (GlcNAc...) asparagine). 2 cysteine pairs are disulfide-bonded: Cys-476–Cys-525 and Cys-567–Cys-616. Asn-619, Asn-716, and Asn-802 each carry an N-linked (GlcNAc...) asparagine glycan. Fibronectin type-III domains are found at residues 649-744 (PPFD…TKAS), 746-843 (PDKN…SGED), 848-950 (APGN…TPEG), 954-1051 (APSS…VDEA), and 1064-1156 (QAVN…TGPA). A glycan (N-linked (GlcNAc...) (complex) asparagine) is linked at Asn-858. 6 N-linked (GlcNAc...) asparagine glycosylation sites follow: Asn-993, Asn-1009, Asn-1019, Asn-1072, Asn-1083, and Asn-1115. A helical membrane pass occupies residues 1168-1190 (GWFIGLMCAVALLILILLIVCFI). Topologically, residues 1191 to 1304 (RRNKGGKYPV…SPVNAMNSFV (114 aa)) are cytoplasmic. Basic and acidic residues predominate over residues 1199-1219 (PVKEKEDAHADPEIQPMKEDD). The interval 1199 to 1304 (PVKEKEDAHA…SPVNAMNSFV (106 aa)) is disordered. Thr-1221 is subject to Phosphothreonine. Tyr-1225 is modified (phosphotyrosine). Ser-1226 is modified (phosphoserine). Positions 1241–1250 (PSDRTVKKED) are enriched in basic and acidic residues. Ser-1251, Ser-1254, Ser-1271, Ser-1290, Ser-1291, and Ser-1295 each carry phosphoserine. Residues 1288–1304 (NESSEAPSPVNAMNSFV) are compositionally biased toward polar residues.

Belongs to the immunoglobulin superfamily. L1/neurofascin/NgCAM family. As to quaternary structure, constituent of a NFASC/NRCAM/ankyrin-G complex. Detected in a complex with CNTN1 and PTPRB. Interacts with GLDN/gliomedin. Interacts with MYOC. As to expression, detected in all the examined tissues. In the brain it was detected in the amygdala, caudate nucleus, corpus callosum, hippocampus, hypothalamus, substantia nigra, subthalamic nucleus and thalamus.

The protein localises to the cell membrane. It is found in the cell projection. The protein resides in the axon. Its subcellular location is the secreted. Functionally, cell adhesion protein that is required for normal responses to cell-cell contacts in brain and in the peripheral nervous system. Plays a role in neurite outgrowth in response to contactin binding. Plays a role in mediating cell-cell contacts between Schwann cells and axons. Plays a role in the formation and maintenance of the nodes of Ranvier on myelinated axons. Nodes of Ranvier contain clustered sodium channels that are crucial for the saltatory propagation of action potentials along myelinated axons. During development, nodes of Ranvier are formed by the fusion of two heminodes. Required for normal clustering of sodium channels at heminodes; not required for the formation of mature nodes with normal sodium channel clusters. Required, together with GLDN, for maintaining NFASC and sodium channel clusters at mature nodes of Ranvier. The chain is Neuronal cell adhesion molecule (NRCAM) from Homo sapiens (Human).